Consider the following 375-residue polypeptide: All-trans-retinol dehydrogenase [NAD(+)] ADH1B (375 aa).

Position 2 is an N-acetylserine (serine 2). A Phosphoserine modification is found at serine 23. Phosphotyrosine is present on tyrosine 35. Zn(2+) contacts are provided by cysteine 47, histidine 68, cysteine 98, cysteine 101, cysteine 104, cysteine 112, and cysteine 175. Residues 200 to 205 (GLGGVG), aspartate 224, lysine 229, 293 to 295 (VGV), and arginine 370 contribute to the NAD(+) site.

The protein belongs to the zinc-containing alcohol dehydrogenase family. Homodimer or heterodimer of closely related subunits. The cofactor is Zn(2+). Expressed in liver.

The protein resides in the cytoplasm. It carries out the reaction all-trans-retinol + NAD(+) = all-trans-retinal + NADH + H(+). The catalysed reaction is all-trans-4-hydroxyretinol + NAD(+) = all-trans-4-hydroxyretinal + NADH + H(+). It catalyses the reaction all-trans-4-oxoretinol + NAD(+) = all-trans-4-oxoretinal + NADH + H(+). Its function is as follows. Catalyzes the NAD-dependent oxidation of all-trans-retinol and its derivatives such as all-trans-4-hydroxyretinol and may participate in retinoid metabolism. In vitro can also catalyze the NADH-dependent reduction of all-trans-retinal and its derivatives such as all-trans-4-oxoretinal. Catalyzes in the oxidative direction with higher efficiency. Has the same affinity for all-trans-4-hydroxyretinol and all-trans-4-oxoretinal. The sequence is that of All-trans-retinol dehydrogenase [NAD(+)] ADH1B from Papio hamadryas (Hamadryas baboon).